The chain runs to 175 residues: DM domain-containing protein mab-23 (175 aa).

The segment at residues 8–56 (CQLCANHGIFNQPKKGHKQKCPYRTCPCSLCALNTKRRALDQIERQLKH) is a DNA-binding region (DM). Residues 58–93 (NEPMTGQTATSMASPTPECPLSPTTPKMTPHTPTSG) form a disordered region. Over residues 59-71 (EPMTGQTATSMAS) the composition is skewed to polar residues. The span at 81–91 (TTPKMTPHTPT) shows a compositional bias: low complexity.

In terms of tissue distribution, expressed in a limited number of non-sex-specific tissues in males, including 6-8 unidentified neurons of the head, ventral body wall muscle, and the PHCL/R neurons.

It localises to the nucleus. Its function is as follows. Probable transcription factor that plays a role in the development of the dopaminergic neurons of the male-specific genital sensilla (simple sense organs) known as rays, by negatively regulating the activity of the transcription factor ast-1. Involved in male mating behavior, probably as a result of a role in the differentiation of male-specific diagonal muscles. Required for development of the male proctodeum. May be dispensable in hermaphrodites. The polypeptide is DM domain-containing protein mab-23 (Caenorhabditis elegans).